A 600-amino-acid chain; its full sequence is Adenine deaminase 2 (600 aa).

The protein belongs to the metallo-dependent hydrolases superfamily. Adenine deaminase family. Mn(2+) is required as a cofactor.

It catalyses the reaction adenine + H2O + H(+) = hypoxanthine + NH4(+). This chain is Adenine deaminase 2, found in Bradyrhizobium sp. (strain ORS 278).